The following is a 395-amino-acid chain: ATP phosphoribosyltransferase regulatory subunit (395 aa).

The protein belongs to the class-II aminoacyl-tRNA synthetase family. HisZ subfamily. In terms of assembly, heteromultimer composed of HisG and HisZ subunits.

The protein localises to the cytoplasm. Its pathway is amino-acid biosynthesis; L-histidine biosynthesis; L-histidine from 5-phospho-alpha-D-ribose 1-diphosphate: step 1/9. In terms of biological role, required for the first step of histidine biosynthesis. May allow the feedback regulation of ATP phosphoribosyltransferase activity by histidine. The sequence is that of ATP phosphoribosyltransferase regulatory subunit from Pseudomonas fluorescens (strain ATCC BAA-477 / NRRL B-23932 / Pf-5).